A 193-amino-acid chain; its full sequence is ATP-dependent Clp protease proteolytic subunit 1 (193 aa).

Residue S98 is the Nucleophile of the active site. H123 is an active-site residue.

This sequence belongs to the peptidase S14 family. As to quaternary structure, fourteen ClpP subunits assemble into 2 heptameric rings which stack back to back to give a disk-like structure with a central cavity, resembling the structure of eukaryotic proteasomes.

The protein localises to the cytoplasm. It catalyses the reaction Hydrolysis of proteins to small peptides in the presence of ATP and magnesium. alpha-casein is the usual test substrate. In the absence of ATP, only oligopeptides shorter than five residues are hydrolyzed (such as succinyl-Leu-Tyr-|-NHMec, and Leu-Tyr-Leu-|-Tyr-Trp, in which cleavage of the -Tyr-|-Leu- and -Tyr-|-Trp bonds also occurs).. Cleaves peptides in various proteins in a process that requires ATP hydrolysis. Has a chymotrypsin-like activity. Plays a major role in the degradation of misfolded proteins. This Bacillus anthracis protein is ATP-dependent Clp protease proteolytic subunit 1.